The following is a 61-amino-acid chain: Bowman-Birk type proteinase inhibitor (61 aa).

Cystine bridges form between Cys4/Cys57, Cys5/Cys20, Cys8/Cys53, Cys10/Cys18, Cys27/Cys34, Cys31/Cys46, and Cys36/Cys44.

The protein belongs to the Bowman-Birk serine protease inhibitor family.

In terms of biological role, strong inhibitor of trypsin with a 1:1 stoichiometry. Weaker inhibitor of chymotrypsin. The sequence is that of Bowman-Birk type proteinase inhibitor from Erythrina variegata (Indian coral tree).